Consider the following 159-residue polypeptide: H/ACA ribonucleoprotein complex subunit 2-like protein (159 aa).

The segment at 1–28 (MAKTPKKDKTEEKEEHEESGGNKEDRER) is disordered.

The protein belongs to the eukaryotic ribosomal protein eL8 family. In terms of assembly, component of the small nucleolar ribonucleoprotein particle containing H/ACA-type snoRNAs (H/ACA snoRNPs). Component of the telomerase holoenzyme complex.

It is found in the nucleus. The protein localises to the nucleolus. Functionally, required for ribosome biogenesis. Part of a complex which catalyzes pseudouridylation of rRNA. This involves the isomerization of uridine such that the ribose is subsequently attached to C5, instead of the normal N1. Pseudouridine ('psi') residues may serve to stabilize the conformation of rRNAs. This Branchiostoma belcheri (Amphioxus) protein is H/ACA ribonucleoprotein complex subunit 2-like protein.